The chain runs to 334 residues: Beta-hexosaminidase (334 aa).

Substrate contacts are provided by residues Asp-62, Arg-70, Arg-130, and 160–161 (KH). His-173 (proton donor/acceptor) is an active-site residue. The active-site Nucleophile is Asp-243.

The protein belongs to the glycosyl hydrolase 3 family. NagZ subfamily.

The protein resides in the cytoplasm. It carries out the reaction Hydrolysis of terminal non-reducing N-acetyl-D-hexosamine residues in N-acetyl-beta-D-hexosaminides.. The protein operates within cell wall biogenesis; peptidoglycan recycling. In terms of biological role, plays a role in peptidoglycan recycling by cleaving the terminal beta-1,4-linked N-acetylglucosamine (GlcNAc) from peptide-linked peptidoglycan fragments, giving rise to free GlcNAc, anhydro-N-acetylmuramic acid and anhydro-N-acetylmuramic acid-linked peptides. In Photobacterium profundum (strain SS9), this protein is Beta-hexosaminidase.